A 320-amino-acid chain; its full sequence is ATP-dependent 6-phosphofructokinase (320 aa).

Position 12 (Gly12) interacts with ATP. ADP-binding positions include 22–26 (RGVVR) and 55–60 (RYSVSD). ATP is bound by residues 73-74 (RF) and 103-106 (GDGS). Asp104 serves as a coordination point for Mg(2+). 126 to 128 (TID) serves as a coordination point for substrate. Asp128 serves as the catalytic Proton acceptor. Arg155 is a binding site for ADP. Substrate is bound by residues Arg163 and 170–172 (MGR). ADP-binding positions include 186–188 (GCE), Lys212, and 214–216 (KKH). Residues Glu223, Arg244, and 250-253 (HIQR) each bind substrate.

Belongs to the phosphofructokinase type A (PFKA) family. ATP-dependent PFK group I subfamily. Prokaryotic clade 'B1' sub-subfamily. Homotetramer. Requires Mg(2+) as cofactor.

It is found in the cytoplasm. It catalyses the reaction beta-D-fructose 6-phosphate + ATP = beta-D-fructose 1,6-bisphosphate + ADP + H(+). It functions in the pathway carbohydrate degradation; glycolysis; D-glyceraldehyde 3-phosphate and glycerone phosphate from D-glucose: step 3/4. With respect to regulation, allosterically activated by ADP and other diphosphonucleosides, and allosterically inhibited by phosphoenolpyruvate. Its function is as follows. Catalyzes the phosphorylation of D-fructose 6-phosphate to fructose 1,6-bisphosphate by ATP, the first committing step of glycolysis. The sequence is that of ATP-dependent 6-phosphofructokinase from Citrobacter koseri (strain ATCC BAA-895 / CDC 4225-83 / SGSC4696).